Here is a 239-residue protein sequence, read N- to C-terminus: Glucosamine-6-phosphate deaminase (239 aa).

Residue aspartate 62 is the Proton acceptor; for enolization step of the active site. The active-site For ring-opening step is the asparagine 128. Histidine 130 (proton acceptor; for ring-opening step) is an active-site residue. Residue glutamate 135 is the For ring-opening step of the active site.

The protein belongs to the glucosamine/galactosamine-6-phosphate isomerase family. NagB subfamily.

The enzyme catalyses alpha-D-glucosamine 6-phosphate + H2O = beta-D-fructose 6-phosphate + NH4(+). It functions in the pathway amino-sugar metabolism; N-acetylneuraminate degradation; D-fructose 6-phosphate from N-acetylneuraminate: step 5/5. In terms of biological role, catalyzes the reversible isomerization-deamination of glucosamine 6-phosphate (GlcN6P) to form fructose 6-phosphate (Fru6P) and ammonium ion. The polypeptide is Glucosamine-6-phosphate deaminase (Lactobacillus helveticus (strain DPC 4571)).